The following is a 563-amino-acid chain: Arginine--tRNA ligase (563 aa).

Residues 120 to 130 carry the 'HIGH' region motif; it reads PNIAKPFHIGH.

The protein belongs to the class-I aminoacyl-tRNA synthetase family. In terms of assembly, monomer.

The protein resides in the cytoplasm. It catalyses the reaction tRNA(Arg) + L-arginine + ATP = L-arginyl-tRNA(Arg) + AMP + diphosphate. This chain is Arginine--tRNA ligase, found in Clostridium botulinum (strain 657 / Type Ba4).